Consider the following 165-residue polypeptide: Sporulation thiol-disulfide oxidoreductase A (165 aa).

An N-terminal signal peptide occupies residues methionine 1–alanine 26. A Thioredoxin domain is found at glutamate 27–glutamate 165. A disulfide bond links cysteine 65 and cysteine 68.

This sequence belongs to the thioredoxin family.

It localises to the spore outer membrane. Thiol-disulfide oxidoreductase with a reductive function, involved in spore cortex synthesis. It could be involved either in breaking disulfide bonds in cortex components or in proteins that are important for cortex synthesis, or in thiol/disulfide bond interchange. In Bacillus subtilis (strain 168), this protein is Sporulation thiol-disulfide oxidoreductase A (stoA).